Here is a 336-residue protein sequence, read N- to C-terminus: Formimidoylglutamase (336 aa).

Residues histidine 129, aspartate 160, histidine 162, aspartate 164, aspartate 257, and aspartate 259 each contribute to the Mn(2+) site.

This sequence belongs to the arginase family. Mn(2+) is required as a cofactor.

The enzyme catalyses N-formimidoyl-L-glutamate + H2O = formamide + L-glutamate. Its pathway is amino-acid degradation; L-histidine degradation into L-glutamate; L-glutamate from N-formimidoyl-L-glutamate (hydrolase route): step 1/1. Catalyzes the conversion of N-formimidoyl-L-glutamate to L-glutamate and formamide. The polypeptide is Formimidoylglutamase (Vibrio vulnificus (strain CMCP6)).